The primary structure comprises 434 residues: Serine hydroxymethyltransferase (434 aa).

(6S)-5,6,7,8-tetrahydrofolate is bound by residues L128 and 132–134 (GHL). Residue K237 is modified to N6-(pyridoxal phosphate)lysine.

Belongs to the SHMT family. Homodimer. Pyridoxal 5'-phosphate is required as a cofactor.

It localises to the cytoplasm. The enzyme catalyses (6R)-5,10-methylene-5,6,7,8-tetrahydrofolate + glycine + H2O = (6S)-5,6,7,8-tetrahydrofolate + L-serine. It functions in the pathway one-carbon metabolism; tetrahydrofolate interconversion. The protein operates within amino-acid biosynthesis; glycine biosynthesis; glycine from L-serine: step 1/1. In terms of biological role, catalyzes the reversible interconversion of serine and glycine with tetrahydrofolate (THF) serving as the one-carbon carrier. This reaction serves as the major source of one-carbon groups required for the biosynthesis of purines, thymidylate, methionine, and other important biomolecules. Also exhibits THF-independent aldolase activity toward beta-hydroxyamino acids, producing glycine and aldehydes, via a retro-aldol mechanism. The sequence is that of Serine hydroxymethyltransferase from Corynebacterium efficiens (strain DSM 44549 / YS-314 / AJ 12310 / JCM 11189 / NBRC 100395).